Here is a 466-residue protein sequence, read N- to C-terminus: cGMP-specific 3',5'-cGMP phosphodiesterase 3 (466 aa).

The segment covering 1 to 120 (MAPQQNIMKQ…NSNNNNSNNN (120 aa)) has biased composition (low complexity). The interval 1 to 150 (MAPQQNIMKQ…NNNKIRGYND (150 aa)) is disordered. Residues 123-134 (DDEEEEGDDEDN) show a composition bias toward acidic residues. Over residues 135–150 (NNNNNSNNNKIRGYND) the composition is skewed to low complexity. Residues 137-458 (NNNSNNNKIR…EIWSNNGSSS (322 aa)) form the PDEase domain. Histidine 213 functions as the Proton donor in the catalytic mechanism. 4 residues coordinate a divalent metal cation: histidine 217, histidine 253, aspartate 254, and aspartate 364.

Belongs to the cyclic nucleotide phosphodiesterase family. It depends on a divalent metal cation as a cofactor.

Its subcellular location is the cytoplasm. It localises to the cytosol. The enzyme catalyses 3',5'-cyclic GMP + H2O = GMP + H(+). With respect to regulation, inhibited by 3-isobutyl-1-methylxanthine (IBMX). Phosphodiesterase specific for cGMP, which is not activated by cGMP. Involved in the degradation of intracellular cGMP. In Dictyostelium discoideum (Social amoeba), this protein is cGMP-specific 3',5'-cGMP phosphodiesterase 3 (pde3).